The primary structure comprises 408 residues: MIFDKSLLGFIGICCLPPILLLIYLPNVSLQWIIVQSGFFSFGAGLLTYKLIPSVADLTSQANLTGMDLNKKGDPKFSGKKIPESLGICVAVVYLVCVILFQTFQWFSFPETIQLSEYNAALTSICFMILLGFGDDVLNLRWRYKLILPMFASLPLLVAYAGGTTVVVPDINFPVPLREWLGVVFDLGIFYRIYLLMLAIFCTNSINILAGINGLEVGQSVVIATSIIIHNLIELTIASSVPSSSSFSSSALSSVSPHLFSLILMIPFLFTTISLLFYNWYPSRVFVGDTYTYFSGMCFAVVAILCHFSKTLLLFFIPQILNFLYSVPQLFGIIPCPRHRVPKFNPETGKMEAIPTNLTIINLLLMITGPLTERQLCVYLLIFQGLCSCVGFGIRYHHLHHNPTLIFI.

2 helical membrane-spanning segments follow: residues 6–26 and 32–52; these read SLLGFIGICCLPPILLLIYLP and WIIVQSGFFSFGAGLLTYKLI. UDP-N-acetyl-alpha-D-glucosamine contacts are provided by D68 and E84. Helical transmembrane passes span 87–107 and 120–140; these read GICVAVVYLVCVILFQTFQWF and AALTSICFMILLGFGDDVLNL. Dolichyl phosphate is bound at residue K145. A run of 2 helical transmembrane segments spans residues 147 to 167 and 181 to 201; these read ILPMFASLPLLVAYAGGTTVV and LGVVFDLGIFYRIYLLMLAIF. 200–208 contributes to the dolichyl phosphate binding site; it reads IFCTNSINI. Residue N207 participates in Mg(2+) binding. N213 lines the UDP-N-acetyl-alpha-D-glucosamine pocket. Helical transmembrane passes span 221–241 and 258–278; these read VVIATSIIIHNLIELTIASSV and HLFSLILMIPFLFTTISLLFY. D289 is a Mg(2+) binding site. A helical membrane pass occupies residues 297 to 317; the sequence is MCFAVVAILCHFSKTLLLFFI. 338-340 serves as a coordination point for UDP-N-acetyl-alpha-D-glucosamine; it reads RHR. The next 2 helical transmembrane spans lie at 351–371 and 376–396; these read MEAIPTNLTIINLLLMITGPL and LCVYLLIFQGLCSCVGFGIRY.

It belongs to the glycosyltransferase 4 family. Homodimer. The cofactor is Mg(2+).

It is found in the endoplasmic reticulum membrane. The enzyme catalyses a di-trans,poly-cis-dolichyl phosphate + UDP-N-acetyl-alpha-D-glucosamine = an N-acetyl-alpha-D-glucosaminyl-diphospho-di-trans,poly-cis-dolichol + UMP. Its pathway is protein modification; protein glycosylation. Inhibited by natural nucleoside antibiotic tunicamycin, which acts as a structural analog and competitor of UDP-GlcNAc. UDP-N-acetylglucosamine--dolichyl-phosphate N-acetylglucosaminephosphotransferase that operates in the biosynthetic pathway of dolichol-linked oligosaccharides, the glycan precursors employed in protein asparagine (N)-glycosylation. The assembly of dolichol-linked oligosaccharides begins on the cytosolic side of the endoplasmic reticulum membrane and finishes in its lumen. The sequential addition of sugars to dolichol pyrophosphate produces dolichol-linked oligosaccharides containing fourteen sugars, including two GlcNAcs, nine mannoses and three glucoses. Once assembled, the oligosaccharide is transferred from the lipid to nascent proteins by oligosaccharyltransferases. Catalyzes the initial step of dolichol-linked oligosaccharide biosynthesis, transfering GlcNAc-1-P from cytosolic UDP-GlcNAc onto the carrier lipid dolichyl phosphate (P-dolichol), yielding GlcNAc-P-P-dolichol embedded in the cytoplasmic leaflet of the endoplasmic reticulum membrane. This is UDP-N-acetylglucosamine--dolichyl-phosphate N-acetylglucosaminephosphotransferase (alg7) from Dictyostelium discoideum (Social amoeba).